The sequence spans 723 residues: Catalase-peroxidase (723 aa).

Positions 97 to 225 (WHAAGSYRVT…LAAVQMGLIY (129 aa)) form a cross-link, tryptophyl-tyrosyl-methioninium (Trp-Tyr) (with M-251). His98 (proton acceptor) is an active-site residue. The tryptophyl-tyrosyl-methioninium (Tyr-Met) (with W-97) cross-link spans 225 to 251 (YVNPEGVNGKSDPLATAAQMRETFARM). His266 contributes to the heme b binding site.

Belongs to the peroxidase family. Peroxidase/catalase subfamily. In terms of assembly, homodimer or homotetramer. Heme b is required as a cofactor. In terms of processing, formation of the three residue Trp-Tyr-Met cross-link is important for the catalase, but not the peroxidase activity of the enzyme.

It carries out the reaction H2O2 + AH2 = A + 2 H2O. The catalysed reaction is 2 H2O2 = O2 + 2 H2O. Functionally, bifunctional enzyme with both catalase and broad-spectrum peroxidase activity. Involved in tumorigenesis. This is Catalase-peroxidase from Rhizobium radiobacter (Agrobacterium tumefaciens).